A 311-amino-acid polypeptide reads, in one-letter code: Malate dehydrogenase (311 aa).

NAD(+) contacts are provided by residues 7–13 and Asp-34; that span reads GAAGGIG. Arg-81 and Arg-87 together coordinate substrate. NAD(+) contacts are provided by residues Asn-94 and 117 to 119; that span reads ITN. 2 residues coordinate substrate: Asn-119 and Arg-153. His-177 acts as the Proton acceptor in catalysis. Met-227 contacts NAD(+).

The protein belongs to the LDH/MDH superfamily. MDH type 1 family. As to quaternary structure, homodimer.

It carries out the reaction (S)-malate + NAD(+) = oxaloacetate + NADH + H(+). In terms of biological role, catalyzes the reversible oxidation of malate to oxaloacetate. The polypeptide is Malate dehydrogenase (Shewanella sp. (strain ANA-3)).